Reading from the N-terminus, the 741-residue chain is Catalase-peroxidase (741 aa).

An N-terminal signal peptide occupies residues 1–21 (MRNFRRFTIALLVLFLGPIGA). Positions 109–231 (WHSAGTYRIS…LAAVQMGLIY (123 aa)) form a cross-link, tryptophyl-tyrosyl-methioninium (Trp-Tyr) (with M-257). Catalysis depends on His-110, which acts as the Proton acceptor. Positions 231–257 (YVNPEGPNGNPDPLAAAKDIRETFGRM) form a cross-link, tryptophyl-tyrosyl-methioninium (Tyr-Met) (with W-109). Position 272 (His-272) interacts with heme b.

Belongs to the peroxidase family. Peroxidase/catalase subfamily. As to quaternary structure, homodimer or homotetramer. Requires heme b as cofactor. In terms of processing, formation of the three residue Trp-Tyr-Met cross-link is important for the catalase, but not the peroxidase activity of the enzyme.

It carries out the reaction H2O2 + AH2 = A + 2 H2O. The enzyme catalyses 2 H2O2 = O2 + 2 H2O. In terms of biological role, bifunctional enzyme with both catalase and broad-spectrum peroxidase activity. The sequence is that of Catalase-peroxidase from Leptospira biflexa serovar Patoc (strain Patoc 1 / Ames).